The sequence spans 537 residues: Phosphoenolpyruvate carboxykinase (ATP) (537 aa).

3 residues coordinate substrate: arginine 61, tyrosine 195, and lysine 201. ATP-binding positions include lysine 201, histidine 220, and 236 to 244; that span reads GLSGTGKTT. Residues lysine 201 and histidine 220 each coordinate Mn(2+). Residue aspartate 257 coordinates Mn(2+). Positions 285, 323, and 448 each coordinate ATP. Residue arginine 323 coordinates substrate.

This sequence belongs to the phosphoenolpyruvate carboxykinase (ATP) family. The cofactor is Mn(2+).

It localises to the cytoplasm. The enzyme catalyses oxaloacetate + ATP = phosphoenolpyruvate + ADP + CO2. Its pathway is carbohydrate biosynthesis; gluconeogenesis. In terms of biological role, involved in the gluconeogenesis. Catalyzes the conversion of oxaloacetate (OAA) to phosphoenolpyruvate (PEP) through direct phosphoryl transfer between the nucleoside triphosphate and OAA. The chain is Phosphoenolpyruvate carboxykinase (ATP) from Rhodopseudomonas palustris (strain BisA53).